Here is a 258-residue protein sequence, read N- to C-terminus: Ribosomal RNA small subunit methyltransferase J (258 aa).

Residues 107 to 108 (RD), 123 to 124 (ER), and Asp-177 contribute to the S-adenosyl-L-methionine site.

This sequence belongs to the methyltransferase superfamily. RsmJ family.

The protein resides in the cytoplasm. It carries out the reaction guanosine(1516) in 16S rRNA + S-adenosyl-L-methionine = N(2)-methylguanosine(1516) in 16S rRNA + S-adenosyl-L-homocysteine + H(+). Specifically methylates the guanosine in position 1516 of 16S rRNA. The sequence is that of Ribosomal RNA small subunit methyltransferase J from Stutzerimonas stutzeri (strain A1501) (Pseudomonas stutzeri).